We begin with the raw amino-acid sequence, 394 residues long: Mannosyl-3-phosphoglycerate synthase (394 aa).

This sequence belongs to the glycosyltransferase 2 family.

It is found in the cytoplasm. It catalyses the reaction (2R)-3-phosphoglycerate + GDP-alpha-D-mannose = 2-O-(alpha-D-mannosyl)-3-phosphoglycerate + GDP + H(+). It participates in carbohydrate biosynthesis; 2-(alpha-D-mannosyl)-D-glycerate biosynthesis; 2-(alpha-D-mannosyl)-D-glycerate from GDP-alpha-D-mannose (MPG route): step 1/2. In terms of biological role, transfers a mannosyl group from GDP-mannose to phosphoglycerate to form mannosyl-3-phosphoglycerate (MPG). In Pyrococcus furiosus (strain ATCC 43587 / DSM 3638 / JCM 8422 / Vc1), this protein is Mannosyl-3-phosphoglycerate synthase (mngA).